The primary structure comprises 240 residues: Probable septum site-determining protein MinC (240 aa).

This sequence belongs to the MinC family. Interacts with MinD and FtsZ.

Its function is as follows. Cell division inhibitor that blocks the formation of polar Z ring septums. Rapidly oscillates between the poles of the cell to destabilize FtsZ filaments that have formed before they mature into polar Z rings. Prevents FtsZ polymerization. This is Probable septum site-determining protein MinC from Buchnera aphidicola subsp. Cinara cedri (strain Cc).